A 1005-amino-acid polypeptide reads, in one-letter code: Espin-like protein (1005 aa).

ANK repeat units follow at residues 1-31, 35-64, 69-99, 103-132, 136-166, 170-200, 204-234, 238-267, 270-299, and 303-332; these read MEAQ…RPDI, LGAG…LPGN, NGAT…GLQD, SGVS…AATL, EGAL…GVNQ, SGAS…DVRL, DGMS…GLTA, EGAT…PIMR, WGGT…DPFL, and DGYT…PVRV. Disordered stretches follow at residues 355 to 383 and 458 to 480; these read EERR…VPRE and ADHP…AAEQ. Residues 458–469 show a composition bias toward basic and acidic residues; the sequence is ADHPPEDQDQSQ. The stretch at 502 to 539 forms a coiled coil; it reads EDDLVYLEKQINDLQLRRRCQEYESELGRLAAQLQALL. Disordered regions lie at residues 611–643, 692–729, 764–794, and 951–975; these read LAQG…QREI, PRGD…GPGL, LEAQ…PRLG, and PHAS…SQGS.

In terms of assembly, interacts with MYO3A (via C-terminus). Interacts with MYO3B (via C-terminus). In terms of tissue distribution, expressed in inner ear hair cells. Expressed in utricle hair bundles (at protein level). Expressed in choclea (at protein level).

It localises to the cell projection. Its subcellular location is the stereocilium. In terms of biological role, binds to but does not cross-link actin. Required for the formation and maintenance of inner ear hair cell stereocilia and staircase formation. Essential for normal hearing. This is Espin-like protein (Espnl) from Mus musculus (Mouse).